The chain runs to 467 residues: MASEGDKLWGGRFVGSIDPIMEMFNSSVSYDQRMWSADIRGSQAYVKALEKAGLVSPTEMEHILTGLDQIHEEWSKGTFVLTKADEDIHTANERRLKELIGEPAGKLHTGRSRNDQVVTDMRLWLRDSCSALHLHLTRLIRTMVDRAAIEIDILFPGYTHMQRAQPIRWSHWILSHAVALCRDAERLGELRKRINVLPLGSGAIAGNPLGVDRELLRKELEFDSVSLNSMDATSERDFIAEFLFWASLCMTHLSKMSEDLIIYSTKEFSFVTLSDSYSTGSSLMPQKKNPDSLELIRSKAGRVFGRCSGFLMTLKGLPSTYNKDLQEDKEAMFDVYDTVCAVLQVASGVISTLQINKEGMEKALSPDMLATDIAYYLVRKGMPFRQAHGLSGKVVQLAETKGIALNKLSLEDLKSISPLFSNDVSKVWNYTNSVEQYTAAGGTAKSCVVAQVEQLRTWLKKTQESVI.

Positions 27, 114, and 159 each coordinate 2-(N(omega)-L-arginino)succinate. The active-site Proton acceptor is the histidine 160. Serine 281 (proton donor) is an active-site residue. Asparagine 289, tyrosine 321, glutamine 326, and lysine 329 together coordinate 2-(N(omega)-L-arginino)succinate.

The protein belongs to the lyase 1 family. Argininosuccinate lyase subfamily. As to quaternary structure, homotetramer.

The enzyme catalyses 2-(N(omega)-L-arginino)succinate = fumarate + L-arginine. The protein operates within amino-acid biosynthesis; L-arginine biosynthesis; L-arginine from L-ornithine and carbamoyl phosphate: step 3/3. It participates in nitrogen metabolism; urea cycle; L-arginine and fumarate from (N(omega)-L-arginino)succinate: step 1/1. This chain is Argininosuccinate lyase (ASL), found in Aquarana catesbeiana (American bullfrog).